The following is a 222-amino-acid chain: Translation initiation factor 6 (222 aa).

Belongs to the eIF-6 family.

Functionally, binds to the 50S ribosomal subunit and prevents its association with the 30S ribosomal subunit to form the 70S initiation complex. This is Translation initiation factor 6 from Methanocorpusculum labreanum (strain ATCC 43576 / DSM 4855 / Z).